The primary structure comprises 680 residues: tRNA 5-methylaminomethyl-2-thiouridine biosynthesis bifunctional protein MnmC (680 aa).

The tRNA (mnm(5)s(2)U34)-methyltransferase stretch occupies residues 1–251 (MSQNHILPQN…KREMIAGTLT (251 aa)). Residues 277–680 (IGGGVASAAL…RLLKGKPLDI (404 aa)) are FAD-dependent cmnm(5)s(2)U34 oxidoreductase.

In the N-terminal section; belongs to the methyltransferase superfamily. tRNA (mnm(5)s(2)U34)-methyltransferase family. The protein in the C-terminal section; belongs to the DAO family. FAD is required as a cofactor.

The protein resides in the cytoplasm. The enzyme catalyses 5-aminomethyl-2-thiouridine(34) in tRNA + S-adenosyl-L-methionine = 5-methylaminomethyl-2-thiouridine(34) in tRNA + S-adenosyl-L-homocysteine + H(+). Its function is as follows. Catalyzes the last two steps in the biosynthesis of 5-methylaminomethyl-2-thiouridine (mnm(5)s(2)U) at the wobble position (U34) in tRNA. Catalyzes the FAD-dependent demodification of cmnm(5)s(2)U34 to nm(5)s(2)U34, followed by the transfer of a methyl group from S-adenosyl-L-methionine to nm(5)s(2)U34, to form mnm(5)s(2)U34. The chain is tRNA 5-methylaminomethyl-2-thiouridine biosynthesis bifunctional protein MnmC from Aliivibrio fischeri (strain ATCC 700601 / ES114) (Vibrio fischeri).